Consider the following 310-residue polypeptide: Membrane protein insertase YidC 2 (310 aa).

The signal sequence occupies residues Met1 to Gly23. Residue Cys24 is the site of N-palmitoyl cysteine attachment. Cys24 is lipidated: S-diacylglycerol cysteine. A run of 5 helical transmembrane segments spans residues Pro33 to Ala53, Leu58 to Leu78, Phe135 to Phe155, Leu180 to Pro200, and Val219 to Phe239. The tract at residues Asn266–Gly310 is disordered. A compositionally biased stretch (polar residues) spans Thr281–Lys297. Over residues Lys298 to Gly310 the composition is skewed to basic residues.

The protein belongs to the OXA1/ALB3/YidC family. Type 2 subfamily.

It localises to the cell membrane. Required for the insertion and/or proper folding and/or complex formation of integral membrane proteins into the membrane. Involved in integration of membrane proteins that insert both dependently and independently of the Sec translocase complex, as well as at least some lipoproteins. This is Membrane protein insertase YidC 2 from Streptococcus agalactiae serotype V (strain ATCC BAA-611 / 2603 V/R).